A 312-amino-acid polypeptide reads, in one-letter code: Apolipoprotein E (312 aa).

The signal sequence occupies residues 1–18; it reads MKALWAVLLATLLTGCLA. 8 consecutive repeat copies span residues 72–93, 94–115, 116–137, 138–159, 160–181, 182–203, 204–225, and 226–247. Residues 72–247 form an 8 X 22 AA approximate tandem repeats region; sequence VLMEDTMTEV…RLEEMREHME (176 aa). Position 135 is a methionine sulfoxide (Met-135). The segment at 150 to 160 is LDL and other lipoprotein receptors binding; the sequence is HLRKMRKRLMR. The LDL receptor binding stretch occupies residues 150-160; sequence HLRKMRKRLMR. 154–157 lines the heparin pocket; sequence MRKR. The segment at 202–282 is lipid-binding and lipoprotein association; that stretch reads TANLGAGAAQ…SWFEPLVEDM (81 aa). Residue 221 to 228 coordinates heparin; that stretch reads SERLRGRL. Residues 258–312 form a homooligomerization region; that stretch reads QQIRLQAEIFQARLKSWFEPLVEDMHRQLANLVEKIQSSVATNSVLSTSVPQENQ. Positions 270–282 are specificity for association with VLDL; it reads RLKSWFEPLVEDM.

This sequence belongs to the apolipoprotein A1/A4/E family. As to quaternary structure, homotetramer. May interact with ABCA1; functionally associated with ABCA1 in the biogenesis of HDLs. May interact with APP/A4 amyloid-beta peptide; the interaction is extremely stable in vitro but its physiological significance is unclear. May interact with MAPT. May interact with MAP2. In the cerebrospinal fluid, interacts with secreted SORL1. Interacts with PMEL; this allows the loading of PMEL luminal fragment on ILVs to induce fibril nucleation. APOE exists as multiple glycosylated and sialylated glycoforms within cells and in plasma. The extent of glycosylation and sialylation are tissue and context specific. In terms of processing, glycated in plasma VLDL. Post-translationally, phosphorylated by FAM20C in the extracellular medium.

It localises to the secreted. The protein resides in the extracellular space. The protein localises to the extracellular matrix. Its subcellular location is the extracellular vesicle. It is found in the endosome. It localises to the multivesicular body. In terms of biological role, APOE is an apolipoprotein, a protein associating with lipid particles, that mainly functions in lipoprotein-mediated lipid transport between organs via the plasma and interstitial fluids. APOE is a core component of plasma lipoproteins and is involved in their production, conversion and clearance. Apolipoproteins are amphipathic molecules that interact both with lipids of the lipoprotein particle core and the aqueous environment of the plasma. As such, APOE associates with chylomicrons, chylomicron remnants, very low density lipoproteins (VLDL) and intermediate density lipoproteins (IDL) but shows a preferential binding to high-density lipoproteins (HDL). It also binds a wide range of cellular receptors including the LDL receptor/LDLR, the LDL receptor-related proteins LRP1, LRP2 and LRP8 and the very low-density lipoprotein receptor/VLDLR that mediate the cellular uptake of the APOE-containing lipoprotein particles. Finally, APOE also has a heparin-binding activity and binds heparan-sulfate proteoglycans on the surface of cells, a property that supports the capture and the receptor-mediated uptake of APOE-containing lipoproteins by cells. A main function of APOE is to mediate lipoprotein clearance through the uptake of chylomicrons, VLDLs, and HDLs by hepatocytes. APOE is also involved in the biosynthesis by the liver of VLDLs as well as their uptake by peripheral tissues ensuring the delivery of triglycerides and energy storage in muscle, heart and adipose tissues. By participating in the lipoprotein-mediated distribution of lipids among tissues, APOE plays a critical role in plasma and tissues lipid homeostasis. APOE is also involved in two steps of reverse cholesterol transport, the HDLs-mediated transport of cholesterol from peripheral tissues to the liver, and thereby plays an important role in cholesterol homeostasis. First, it is functionally associated with ABCA1 in the biogenesis of HDLs in tissues. Second, it is enriched in circulating HDLs and mediates their uptake by hepatocytes. APOE also plays an important role in lipid transport in the central nervous system, regulating neuron survival and sprouting. This Arvicanthis niloticus (African grass rat) protein is Apolipoprotein E (Apoe).